We begin with the raw amino-acid sequence, 86 residues long: RNA-binding protein Hfq (86 aa).

Residues 12-73 (DIFLNQVRKE…ISTISPQKPV (62 aa)) enclose the Sm domain.

The protein belongs to the Hfq family. In terms of assembly, homohexamer.

Its function is as follows. RNA chaperone that binds small regulatory RNA (sRNAs) and mRNAs to facilitate mRNA translational regulation in response to envelope stress, environmental stress and changes in metabolite concentrations. Also binds with high specificity to tRNAs. The chain is RNA-binding protein Hfq from Caldanaerobacter subterraneus subsp. tengcongensis (strain DSM 15242 / JCM 11007 / NBRC 100824 / MB4) (Thermoanaerobacter tengcongensis).